The primary structure comprises 690 residues: Methionine--tRNA ligase (690 aa).

The 'HIGH' region signature appears at 20 to 30 (PYANGSIHLGH). The Zn(2+) site is built by cysteine 151, cysteine 154, cysteine 164, and cysteine 167. Positions 337–341 (KMSKS) match the 'KMSKS' region motif. Lysine 340 lines the ATP pocket. In terms of domain architecture, tRNA-binding spans 589-690 (DFAKVDLRIA…EGAQPGMRVM (102 aa)).

This sequence belongs to the class-I aminoacyl-tRNA synthetase family. MetG type 1 subfamily. Homodimer. The cofactor is Zn(2+).

It is found in the cytoplasm. It catalyses the reaction tRNA(Met) + L-methionine + ATP = L-methionyl-tRNA(Met) + AMP + diphosphate. Is required not only for elongation of protein synthesis but also for the initiation of all mRNA translation through initiator tRNA(fMet) aminoacylation. This is Methionine--tRNA ligase from Vibrio vulnificus (strain YJ016).